Reading from the N-terminus, the 341-residue chain is tRNA N6-adenosine threonylcarbamoyltransferase (341 aa).

Fe cation-binding residues include His-110 and His-114. Substrate is bound by residues 133–137 (LVSGG), Asp-166, Gly-179, and Asn-276. Asp-304 contributes to the Fe cation binding site.

This sequence belongs to the KAE1 / TsaD family. The cofactor is Fe(2+).

The protein localises to the cytoplasm. It carries out the reaction L-threonylcarbamoyladenylate + adenosine(37) in tRNA = N(6)-L-threonylcarbamoyladenosine(37) in tRNA + AMP + H(+). Its function is as follows. Required for the formation of a threonylcarbamoyl group on adenosine at position 37 (t(6)A37) in tRNAs that read codons beginning with adenine. Is involved in the transfer of the threonylcarbamoyl moiety of threonylcarbamoyl-AMP (TC-AMP) to the N6 group of A37, together with TsaE and TsaB. TsaD likely plays a direct catalytic role in this reaction. In Saccharophagus degradans (strain 2-40 / ATCC 43961 / DSM 17024), this protein is tRNA N6-adenosine threonylcarbamoyltransferase.